A 570-amino-acid chain; its full sequence is 4-hydroxy-7-methoxy-3-oxo-3,4-dihydro-2H-1,4-benzoxazin-2-yl glucoside beta-D-glucosidase 1c, chloroplastic (570 aa).

The transit peptide at 1 to 50 (MALLAAATLNPTTHLSIRSRAGHNSENLWLRSAASSQKSKGRFCNLTVRA) directs the protein to the chloroplast. Residues Q92, H194, and 239–240 (NE) contribute to the a beta-D-glucoside site. Residue E240 is the Proton donor of the active site. The cysteines at positions 259 and 265 are disulfide-linked. A beta-D-glucoside-binding positions include Y383, E456, W504, 511 to 512 (EW), and F520. Residue E456 is the Nucleophile of the active site.

The protein belongs to the glycosyl hydrolase 1 family. In terms of assembly, homo- and heterohexamers. In terms of tissue distribution, expressed in young seedlings early after germination.

The protein resides in the plastid. Its subcellular location is the chloroplast. It carries out the reaction Hydrolysis of terminal, non-reducing beta-D-glucosyl residues with release of beta-D-glucose.. The catalysed reaction is DIMBOA beta-D-glucoside + H2O = DIMBOA + D-glucose. It catalyses the reaction DIBOA beta-D-glucoside + H2O = DIBOA + D-glucose. Functionally, acts in defense of young plant parts against pests via the production of hydroxamic acids from hydroxamic acid glucosides. Enzymatic activity is highly correlated with plant growth. The preferred substrate is DIMBOA-beta-D-glucoside. The sequence is that of 4-hydroxy-7-methoxy-3-oxo-3,4-dihydro-2H-1,4-benzoxazin-2-yl glucoside beta-D-glucosidase 1c, chloroplastic (GLU1C) from Triticum aestivum (Wheat).